The following is a 263-amino-acid chain: Glutamate 5-kinase (263 aa).

Residue Lys-15 coordinates ATP. Substrate contacts are provided by Ser-55, Asp-142, and Asn-154. Residues 174 to 175 (SD) and 216 to 222 (TGGIETK) contribute to the ATP site.

Belongs to the glutamate 5-kinase family.

Its subcellular location is the cytoplasm. The enzyme catalyses L-glutamate + ATP = L-glutamyl 5-phosphate + ADP. It participates in amino-acid biosynthesis; L-proline biosynthesis; L-glutamate 5-semialdehyde from L-glutamate: step 1/2. Its function is as follows. Catalyzes the transfer of a phosphate group to glutamate to form L-glutamate 5-phosphate. In Alkaliphilus oremlandii (strain OhILAs) (Clostridium oremlandii (strain OhILAs)), this protein is Glutamate 5-kinase.